The chain runs to 293 residues: MASITLTPSEKDIQAFLEHYQTSLAPSKNPYIRYFLKLPQATVSIYTSGKILLQGEGAEKYASFFGYQAVEQTSGQNLPLIGTDEVGNGSYFGGLAVVAAFVTPDQHDFLRKLGVGDSKTLTDQKIRQIAPILKEKIQHQALLLSPSKYNEVIGDRYNAVSVKVALHNQAIYLLLQKGVQPEKIVIDAFTSAKNYDKYLAQEANRFSNPISLEEKAEGKYLAVAVSSVIARDLFLENLENLGRELGYQLPSGAGTASDKVASQILQAYGMQGLSFCAKLHFKNTEKAKKRLER.

An RNase H type-2 domain is found at 78–293; it reads LPLIGTDEVG…TEKAKKRLER (216 aa). A divalent metal cation-binding residues include D84, E85, and D187.

This sequence belongs to the RNase HII family. RnhC subfamily. It depends on Mn(2+) as a cofactor. Requires Mg(2+) as cofactor.

The protein resides in the cytoplasm. The catalysed reaction is Endonucleolytic cleavage to 5'-phosphomonoester.. Functionally, endonuclease that specifically degrades the RNA of RNA-DNA hybrids. This Streptococcus pneumoniae (strain JJA) protein is Ribonuclease HIII.